The sequence spans 423 residues: Histone deacetylase 14, chloroplastic (423 aa).

The N-terminal 44 residues, 1-44, are a transit peptide targeting the chloroplast; the sequence is MSMALIVRPFFVPGSAGISGSRNICKKNQWRKYLLKPSGSSINC. The interval 62–392 is histone deacetylase; that stretch reads DARLIYSVSA…FRALLGEDSL (331 aa). The Proton donor/acceptor role is filled by H202. Zn(2+)-binding residues include D239, H241, and D326.

The protein belongs to the histone deacetylase family. In terms of assembly, interacts with PP2A2. Requires Zn(2+) as cofactor. As to expression, expressed in stems, leaves, flowers, siliques and mature seeds.

The protein resides in the nucleus. It localises to the cytoplasm. The protein localises to the plastid. Its subcellular location is the chloroplast stroma. It is found in the mitochondrion. The enzyme catalyses N-acetylserotonin + H2O = serotonin + acetate. It carries out the reaction N-acetyltyramine + H2O = tyramine + acetate. It catalyses the reaction N-acetyltryptamine + H2O = tryptamine + acetate. The catalysed reaction is melatonin + H2O = 5-methoxytryptamine + acetate. With respect to regulation, its activity is inhibited by trichostatin A (TSA), a known histone deacetylase inhibitor. Regulates lysine acetylation levels of plastid proteins related to photosynthesis. Involved in the regulation of the activation state of RuBisCO, which is controlled by lysine acetylation of RuBisCO activase under low-light conditions. Associates with alpha- and beta-tubulins and deacetylate alpha-tubulin. Does not seem to be required for the cellular patterning in the root epidermis. Involved in the regulation of melatonin biosynthesis by catalyzing the deacetylation of N-acetylserotonin to produce serotonin. N-acetylserotonin is methylated by acetylserotonin O-methyltransferase (ASMT) to produce melatonin (N-acetyl-5-methoxytryptamine). Deacetylates melatonin to produce 5-methoxytryptamine. In vitro, deacetylates N-acetyltyramine and N-acetyltryptamine to produce tyramine and tryptamine, respectively. The polypeptide is Histone deacetylase 14, chloroplastic (Arabidopsis thaliana (Mouse-ear cress)).